The sequence spans 490 residues: GTPase Der (490 aa).

EngA-type G domains follow at residues 3–166 (PVVA…MDDV) and 203–376 (IKLA…DSST). Residues 9 to 16 (GRPNVGKS), 56 to 60 (DTGGI), 118 to 121 (NKTD), 209 to 216 (GRPNVGKS), 256 to 260 (DTAGV), and 321 to 324 (NKWD) contribute to the GTP site. One can recognise a KH-like domain in the interval 377 to 461 (RRVSTAMLTR…PIRIQFKEGE (85 aa)).

Belongs to the TRAFAC class TrmE-Era-EngA-EngB-Septin-like GTPase superfamily. EngA (Der) GTPase family. As to quaternary structure, associates with the 50S ribosomal subunit.

In terms of biological role, GTPase that plays an essential role in the late steps of ribosome biogenesis. The protein is GTPase Der of Salmonella gallinarum (strain 287/91 / NCTC 13346).